Here is a 476-residue protein sequence, read N- to C-terminus: Ribulose bisphosphate carboxylase large chain (476 aa).

A propeptide spanning residues 1–2 (MS) is cleaved from the precursor. Proline 3 is subject to N-acetylproline. Lysine 14 carries the post-translational modification N6,N6,N6-trimethyllysine. Positions 123 and 173 each coordinate substrate. Lysine 175 (proton acceptor) is an active-site residue. Residue lysine 177 participates in substrate binding. Mg(2+) contacts are provided by lysine 201, aspartate 203, and glutamate 204. Position 201 is an N6-carboxylysine (lysine 201). Residue histidine 294 is the Proton acceptor of the active site. The substrate site is built by arginine 295, histidine 327, and serine 379.

This sequence belongs to the RuBisCO large chain family. Type I subfamily. Heterohexadecamer of 8 large chains and 8 small chains; disulfide-linked. The disulfide link is formed within the large subunit homodimers. Mg(2+) is required as a cofactor. The disulfide bond which can form in the large chain dimeric partners within the hexadecamer appears to be associated with oxidative stress and protein turnover.

The protein resides in the plastid. Its subcellular location is the chloroplast. The catalysed reaction is 2 (2R)-3-phosphoglycerate + 2 H(+) = D-ribulose 1,5-bisphosphate + CO2 + H2O. It carries out the reaction D-ribulose 1,5-bisphosphate + O2 = 2-phosphoglycolate + (2R)-3-phosphoglycerate + 2 H(+). Its function is as follows. RuBisCO catalyzes two reactions: the carboxylation of D-ribulose 1,5-bisphosphate, the primary event in carbon dioxide fixation, as well as the oxidative fragmentation of the pentose substrate in the photorespiration process. Both reactions occur simultaneously and in competition at the same active site. In Zea mays (Maize), this protein is Ribulose bisphosphate carboxylase large chain.